We begin with the raw amino-acid sequence, 433 residues long: Serine carboxypeptidase-like 11 (433 aa).

The signal sequence occupies residues 1–21 (MELTLKLLVLLLFILNHHVGS). 3 cysteine pairs are disulfide-bonded: Cys80–Cys322, Cys243–Cys257, and Cys281–Cys288. The N-linked (GlcNAc...) asparagine glycan is linked to Asn101. The active site involves Ser176. Residue Asn342 is glycosylated (N-linked (GlcNAc...) asparagine). Asp358 is a catalytic residue. An N-linked (GlcNAc...) asparagine glycan is attached at Asn374. His411 is an active-site residue.

Belongs to the peptidase S10 family. Ubiquitous.

It is found in the secreted. Its function is as follows. Probable carboxypeptidase. The polypeptide is Serine carboxypeptidase-like 11 (SCPL11) (Arabidopsis thaliana (Mouse-ear cress)).